Here is a 426-residue protein sequence, read N- to C-terminus: Tubby protein homolog 1 (426 aa).

A required for localization to cilia in AWB sensory neurons region spans residues 16–28 (QRKMLEDKQKQKR). The tract at residues 19–39 (MLEDKQKQKRHQSAGSVRTTS) is disordered.

Belongs to the TUB family. Interacts with rgb-3. In terms of tissue distribution, expressed in ciliated sensory neurons.

The protein resides in the cytoplasm. The protein localises to the cell projection. It localises to the axon. It is found in the dendrite. Its subcellular location is the cilium. Has a role in fat regulation independent of daf-16. Implicated in ciliar sensory function which is required for normal sensory behavior such as chemotaxis. Required for extension and growth of sensory neuronal cilia during postembryonic development, potentially via mediating signaling protein transport and localization of PI(4,5)P2 to the ciliary base. Functions in life span control via the insulin/IGF-1 pathway. Thought to be involved in neuronal trafficking. This chain is Tubby protein homolog 1, found in Caenorhabditis elegans.